An 81-amino-acid chain; its full sequence is Apolipoprotein C-I, acidic form (81 aa).

The N-terminal stretch at 1-24 is a signal peptide; sequence MRLFLSLLVVVLSIVLEGPTPAQG.

Belongs to the apolipoprotein C1 family.

It is found in the secreted. This Cercocebus atys (Sooty mangabey) protein is Apolipoprotein C-I, acidic form (APOC1A).